We begin with the raw amino-acid sequence, 291 residues long: HTH-type transcriptional regulator CitR (291 aa).

Residues Met-1 to Thr-58 form the HTH lysR-type domain. The segment at residues Phe-18–Lys-37 is a DNA-binding region (H-T-H motif).

The protein belongs to the LysR transcriptional regulatory family.

The protein resides in the cytoplasm. Functionally, negative regulatory protein for the citA gene for citrate synthase I. The chain is HTH-type transcriptional regulator CitR (citR) from Bacillus subtilis (strain 168).